Here is a 977-residue protein sequence, read N- to C-terminus: AP-2 complex subunit alpha-1 (977 aa).

A disordered region spans residues 614-702 (AKLKRKKGPG…PSLGPTPEEA (89 aa)). 2 positions are modified to phosphoserine: Ser-626 and Ser-652. A compositionally biased stretch (low complexity) spans 646 to 657 (PTPSTVSTPSPS). The residue at position 653 (Thr-653) is a Phosphothreonine. Ser-655 bears the Phosphoserine mark. The span at 666 to 675 (APPPAAPPAP) shows a compositional bias: pro residues.

Belongs to the adaptor complexes large subunit family. Adaptor protein complex 2 (AP-2) is a heterotetramer composed of two large adaptins (alpha-type subunit AP2A1 or AP2A2 and beta-type subunit AP2B1), a medium adaptin (mu-type subunit AP2M1) and a small adaptin (sigma-type subunit AP2S1). Interacts with HIP1 and RAB11FIP2. Interacts with SLC12A5. Interacts with clathrin. Interacts with SGIP1. Interacts with RFTN1. Interacts with KIAA1107. Interacts with PICALM. Together with AP2B1 and AP2M1, it interacts with ADAM10; this interaction facilitates ADAM10 endocytosis from the plasma membrane during long-term potentiation in hippocampal neurons. Interacts with ABCB11; this interaction regulates cell membrane expression of ABCB11 through its internalization in a clathrin-dependent manner and its subsequent degradation. Probably interacts with ACE2 (via endocytic sorting signal motif); the interaction is inhibited by ACE2 phosphorylation. Expressed in the brain (at protein level). Isoform A: Expressed only in neuronal tissue and skeletal muscle. Isoform B: Widely expressed.

It is found in the cell membrane. Its subcellular location is the membrane. It localises to the coated pit. Its function is as follows. Component of the adaptor protein complex 2 (AP-2). Adaptor protein complexes function in protein transport via transport vesicles in different membrane traffic pathways. Adaptor protein complexes are vesicle coat components and appear to be involved in cargo selection and vesicle formation. AP-2 is involved in clathrin-dependent endocytosis in which cargo proteins are incorporated into vesicles surrounded by clathrin (clathrin-coated vesicles, CCVs) which are destined for fusion with the early endosome. The clathrin lattice serves as a mechanical scaffold but is itself unable to bind directly to membrane components. Clathrin-associated adaptor protein (AP) complexes which can bind directly to both the clathrin lattice and to the lipid and protein components of membranes are considered to be the major clathrin adaptors contributing the CCV formation. AP-2 also serves as a cargo receptor to selectively sort the membrane proteins involved in receptor-mediated endocytosis. AP-2 seems to play a role in the recycling of synaptic vesicle membranes from the presynaptic surface. AP-2 recognizes Y-X-X-[FILMV] (Y-X-X-Phi) and [ED]-X-X-X-L-[LI] endocytosis signal motifs within the cytosolic tails of transmembrane cargo molecules. AP-2 may also play a role in maintaining normal post-endocytic trafficking through the ARF6-regulated, non-clathrin pathway. The AP-2 alpha subunit binds polyphosphoinositide-containing lipids, positioning AP-2 on the membrane. During long-term potentiation in hippocampal neurons, AP-2 is responsible for the endocytosis of ADAM10. The AP-2 alpha subunit acts via its C-terminal appendage domain as a scaffolding platform for endocytic accessory proteins. The AP-2 alpha and AP-2 sigma subunits are thought to contribute to the recognition of the [ED]-X-X-X-L-[LI] motif. This Mus musculus (Mouse) protein is AP-2 complex subunit alpha-1 (Ap2a1).